Here is a 487-residue protein sequence, read N- to C-terminus: UDP-glycosyltransferase 72E1 (487 aa).

The active-site Proton acceptor is the H18. Residue H18 coordinates an anthocyanidin. D116 (charge relay) is an active-site residue. UDP-alpha-D-glucose contacts are provided by A351, Q353, H368, W371, N372, S373, and E376. Residue A391 participates in an anthocyanidin binding. UDP-alpha-D-glucose-binding residues include E392 and Q393.

The protein belongs to the UDP-glycosyltransferase family. In terms of assembly, interacts with SIS8. As to expression, expressed in seedlings, roots and leaves.

It localises to the nucleus. The catalysed reaction is (E)-coniferaldehyde + UDP-alpha-D-glucose = 4-O-(beta-D-glucosyl)-4-(E)-coniferyl aldehyde + UDP + H(+). It carries out the reaction (E)-sinapaldehyde + UDP-alpha-D-glucose = 4-O-(beta-D-glucosyl)-4-trans-sinapoyl aldehyde + UDP + H(+). In terms of biological role, UDP-glycosyltransferase that glucosylates coniferyl aldehyde to form coniferyl aldehyde 4-O-glucoside. Glucosylates sinapyl aldehyde to form sinapyl aldehyde 4-O-glucoside. Is not active in presence of coniferyl alcohol or sinapyl alcohol. Can glucosylate the phytotoxic xenobiotic compound 2,4,5-trichlorophenol (TCP). This Arabidopsis thaliana (Mouse-ear cress) protein is UDP-glycosyltransferase 72E1.